A 568-amino-acid chain; its full sequence is C6 finger domain transcription factor BOA13 (568 aa).

Positions 14–41 form a DNA-binding region, zn(2)-C6 fungal-type; the sequence is CNECHASKVRCSGERTGCRRCVYNQQKC. 3 disordered regions span residues 92-114, 207-278, and 467-490; these read EANG…EGIT, ATSS…HHNH, and RSRS…FSNP. A compositionally biased stretch (basic and acidic residues) spans 242–259; the sequence is HSDLSEKQAQHAQNDLRW. Residues 260–274 show a composition bias toward polar residues; that stretch reads RSQSQSYKRPTISTQ. Over residues 470-490 the composition is skewed to low complexity; sequence SLSTPSPRNTPSTSNSPFSNP.

It is found in the nucleus. In terms of biological role, transcription factor that probably regulates the gene clusters that mediates the biosynthesis of botcinin acid and its botcinin derivatives, acetate-derived polyketides that contribute to virulence when combined with the sesquiterpene botrydial. Botcinin acid and its derivatives have been shown to induce chlorosis and necrosis during host plant infection, but also have antifungal activities. The polypeptide is C6 finger domain transcription factor BOA13 (Botryotinia fuckeliana (strain B05.10) (Noble rot fungus)).